We begin with the raw amino-acid sequence, 291 residues long: Ribosomal RNA small subunit methyltransferase A (291 aa).

The S-adenosyl-L-methionine site is built by Asn-27, Leu-29, Gly-54, Glu-75, Asp-100, and Asn-125.

Belongs to the class I-like SAM-binding methyltransferase superfamily. rRNA adenine N(6)-methyltransferase family. RsmA subfamily.

The protein localises to the cytoplasm. It catalyses the reaction adenosine(1518)/adenosine(1519) in 16S rRNA + 4 S-adenosyl-L-methionine = N(6)-dimethyladenosine(1518)/N(6)-dimethyladenosine(1519) in 16S rRNA + 4 S-adenosyl-L-homocysteine + 4 H(+). Its function is as follows. Specifically dimethylates two adjacent adenosines (A1518 and A1519) in the loop of a conserved hairpin near the 3'-end of 16S rRNA in the 30S particle. May play a critical role in biogenesis of 30S subunits. This Streptococcus mutans serotype c (strain ATCC 700610 / UA159) protein is Ribosomal RNA small subunit methyltransferase A.